A 387-amino-acid chain; its full sequence is Alkanesulfonate monooxygenase (387 aa).

The disordered stretch occupies residues 365–387 (HNSGPFGETVGNDYRPSRLASQS).

The protein belongs to the SsuD family.

The enzyme catalyses an alkanesulfonate + FMNH2 + O2 = an aldehyde + FMN + sulfite + H2O + 2 H(+). Catalyzes the desulfonation of aliphatic sulfonates. This chain is Alkanesulfonate monooxygenase, found in Bradyrhizobium diazoefficiens (strain JCM 10833 / BCRC 13528 / IAM 13628 / NBRC 14792 / USDA 110).